A 299-amino-acid polypeptide reads, in one-letter code: ATP phosphoribosyltransferase (299 aa).

Belongs to the ATP phosphoribosyltransferase family. Long subfamily. In terms of assembly, equilibrium between an active dimeric form, an inactive hexameric form and higher aggregates. Interconversion between the various forms is largely reversible and is influenced by the natural substrates and inhibitors of the enzyme. Requires Mg(2+) as cofactor.

It localises to the cytoplasm. It catalyses the reaction 1-(5-phospho-beta-D-ribosyl)-ATP + diphosphate = 5-phospho-alpha-D-ribose 1-diphosphate + ATP. Its pathway is amino-acid biosynthesis; L-histidine biosynthesis; L-histidine from 5-phospho-alpha-D-ribose 1-diphosphate: step 1/9. Feedback inhibited by histidine. In terms of biological role, catalyzes the condensation of ATP and 5-phosphoribose 1-diphosphate to form N'-(5'-phosphoribosyl)-ATP (PR-ATP). Has a crucial role in the pathway because the rate of histidine biosynthesis seems to be controlled primarily by regulation of HisG enzymatic activity. In Salmonella agona (strain SL483), this protein is ATP phosphoribosyltransferase.